A 238-amino-acid chain; its full sequence is ATP-dependent dethiobiotin synthetase BioD (238 aa).

Position 12–17 (12–17) interacts with ATP; the sequence is EVGKTV. T16 serves as a coordination point for Mg(2+). K37 is a catalytic residue. Residue T41 participates in substrate binding. Residues D50, 109–112, 170–171, and 200–202 each bind ATP; these read EGAG, GS, and PAG. Mg(2+) contacts are provided by D50 and E109.

The protein belongs to the dethiobiotin synthetase family. In terms of assembly, homodimer. Mg(2+) serves as cofactor.

The protein localises to the cytoplasm. The catalysed reaction is (7R,8S)-7,8-diammoniononanoate + CO2 + ATP = (4R,5S)-dethiobiotin + ADP + phosphate + 3 H(+). The protein operates within cofactor biosynthesis; biotin biosynthesis; biotin from 7,8-diaminononanoate: step 1/2. In terms of biological role, catalyzes a mechanistically unusual reaction, the ATP-dependent insertion of CO2 between the N7 and N8 nitrogen atoms of 7,8-diaminopelargonic acid (DAPA, also called 7,8-diammoniononanoate) to form a ureido ring. This chain is ATP-dependent dethiobiotin synthetase BioD, found in Streptomyces avermitilis (strain ATCC 31267 / DSM 46492 / JCM 5070 / NBRC 14893 / NCIMB 12804 / NRRL 8165 / MA-4680).